The following is a 202-amino-acid chain: Mitochondrial import receptor subunit TOM20-3 (202 aa).

Position 1 is an N-acetylmethionine (methionine 1). At 1 to 174 (MDTETEFDRI…NKKSSDAKYD (174 aa)) the chain is on the cytoplasmic side. TPR repeat units lie at residues 38-74 (GGVL…DPKK) and 86-119 (TSFA…QPDN). The segment at 146–166 (SQPMGRVEAPAPPSSKAVKNK) is disordered. Residues 175–192 (AMGWVILAIGVVAWISFA) form a helical membrane-spanning segment. Residues 193 to 202 (KANVPVSPPR) are Mitochondrial intermembrane-facing.

This sequence belongs to the Tom20 family. Forms part of the preprotein translocase complex of the outer mitochondrial membrane (TOM complex) which consists of at least 6 different proteins (TOM5, TOM6, TOM7, TOM20, TOM22/TOM9 and TOM40). Component of a mitochondrial large protein complex that contains, at least, MIC60, DGS1, TOM40, TOM20 proteins, and petC/RISP. Post-translationally, the N-terminus is blocked. As to expression, expressed in roots, flowers, young cotyledons and leaves.

It localises to the mitochondrion outer membrane. Its function is as follows. Central component of the receptor complex responsible for the recognition and translocation of cytosolically synthesized mitochondrial preproteins. Together with TOM22 functions as the transit peptide receptor at the surface of the mitochondrion outer membrane and facilitates the movement of preproteins into the translocation pore. This is Mitochondrial import receptor subunit TOM20-3 from Arabidopsis thaliana (Mouse-ear cress).